The sequence spans 185 residues: MIEETLLEAEEKMEKAVLVTKEDFASIRTGRPSPATFSRITVEYYGAMTPVNQLASFQVPEPRMVIISPYDKAAMPAIEKAIRESDLGVNPSNDGNIIRVVFPELSEERRKEYVKVARNKAEDGRTSVRNVRRQAKDAIDKAVKAGEIGEDEGHRAQKELDALTQKYVGEIDELLKHKESELLEV.

The protein belongs to the RRF family.

The protein localises to the cytoplasm. Its function is as follows. Responsible for the release of ribosomes from messenger RNA at the termination of protein biosynthesis. May increase the efficiency of translation by recycling ribosomes from one round of translation to another. In Thermobifida fusca (strain YX), this protein is Ribosome-recycling factor.